Here is a 1649-residue protein sequence, read N- to C-terminus: Cortactin-binding protein 2 (1649 aa).

Residues methionine 1–alanine 23 form a disordered region. Residues arginine 119–lysine 276 adopt a coiled-coil conformation. Disordered regions lie at residues isoleucine 366–glycine 440 and glycine 454–serine 478. Low complexity-rich tracts occupy residues valine 368–serine 379 and proline 386–serine 396. Positions glutamine 411–alanine 422 are enriched in polar residues. Arginine 498 is modified (asymmetric dimethylarginine). A disordered region spans residues phenylalanine 499–serine 616. Residues threonine 583–glutamine 593 are compositionally biased toward polar residues. ANK repeat units follow at residues glycine 709–tyrosine 739, aspartate 743–alanine 772, asparagine 776–histidine 805, glycine 809–valine 838, and aspartate 842–glycine 871. A disordered region spans residues asparagine 872–serine 897. One copy of the ANK 6 repeat lies at glutamate 912–arginine 942. The tract at residues serine 1444 to glutamate 1482 is disordered. Serine 1524 carries the post-translational modification Phosphoserine. Residues proline 1616 to asparagine 1649 are disordered. Low complexity predominate over residues serine 1624–glutamine 1638. Polar residues predominate over residues isoleucine 1639 to asparagine 1649.

As to quaternary structure, interacts with CTTN/cortactin SH3 domain. Interacts with STRN, STRN4/zinedin and MOB4/phocein; this interactions mediate the association with the STRIPAK core complex and may regulate dendritic spine distribution of the STRIPAK complex in hippocampal neurons. Activation of glutamate receptors weakens the interaction with STRN and STRN4.

The protein resides in the cytoplasm. It is found in the cell cortex. Its subcellular location is the cell projection. It localises to the dendritic spine. Regulates the dendritic spine distribution of CTTN/cortactin in hippocampal neurons, and thus controls dendritic spinogenesis and dendritic spine maintenance. Associates with the striatin-interacting phosphatase and kinase (STRIPAK) core complex to regulate dendritic spine distribution of the STRIPAK complex in hippocampal neurons. This is Cortactin-binding protein 2 (CTTNBP2) from Aotus nancymaae (Ma's night monkey).